The chain runs to 436 residues: Anaerobic glycerol-3-phosphate dehydrogenase subunit B (436 aa).

Belongs to the anaerobic G-3-P dehydrogenase subunit B family. As to quaternary structure, composed of a catalytic GlpA/B dimer and of membrane bound GlpC. Requires FMN as cofactor.

The catalysed reaction is a quinone + sn-glycerol 3-phosphate = dihydroxyacetone phosphate + a quinol. The protein operates within polyol metabolism; glycerol degradation via glycerol kinase pathway; glycerone phosphate from sn-glycerol 3-phosphate (anaerobic route): step 1/1. Its function is as follows. Conversion of glycerol 3-phosphate to dihydroxyacetone. Uses fumarate or nitrate as electron acceptor. The chain is Anaerobic glycerol-3-phosphate dehydrogenase subunit B from Vibrio cholerae serotype O1 (strain M66-2).